The chain runs to 399 residues: MTRFQRVAVLGSTGSIGDSTLDVIARHPDRLGVYALSAYSRMDKLAAQAAACGAAVVVVPDDAAAARFRAAWRGKAAMPEVRVGPRALAETAAAPECTTVMAAIVGAAGLPAALAAAQAGKRVLLANKEALVAAGSLFMAAVRENGAELLPIDSEHNAIFQCMPQGARAAAPTAPAPGVRRLLLTASGGPFRRQDPADLHEVTPAQACAHPNWSMGRKISVDSATMLNKGLEVIEAHWLFAMPSERIDVLIHPQSVVHSMVEYDDGSVLAQLGQPDMRTPIAYGLGFPERLASGVGLLDLTRWGRLDFEQPDLQRFPCLALSFAALRAGQPACVALNAANEVAVAAFLEGRLRYTWIARVIEAVLEWQAKQASVTLTSLDDVLDLDARARSFAGNLGLA.

NADPH is bound by residues T13, G14, S15, I16, and N127. K128 contacts 1-deoxy-D-xylulose 5-phosphate. E129 provides a ligand contact to NADPH. Position 153 (D153) interacts with Mn(2+). 4 residues coordinate 1-deoxy-D-xylulose 5-phosphate: S154, E155, S187, and H210. Mn(2+) is bound at residue E155. Residue G216 coordinates NADPH. Residues S223, N228, K229, and E232 each coordinate 1-deoxy-D-xylulose 5-phosphate. E232 is a binding site for Mn(2+).

Belongs to the DXR family. Requires Mg(2+) as cofactor. The cofactor is Mn(2+).

It carries out the reaction 2-C-methyl-D-erythritol 4-phosphate + NADP(+) = 1-deoxy-D-xylulose 5-phosphate + NADPH + H(+). The protein operates within isoprenoid biosynthesis; isopentenyl diphosphate biosynthesis via DXP pathway; isopentenyl diphosphate from 1-deoxy-D-xylulose 5-phosphate: step 1/6. In terms of biological role, catalyzes the NADPH-dependent rearrangement and reduction of 1-deoxy-D-xylulose-5-phosphate (DXP) to 2-C-methyl-D-erythritol 4-phosphate (MEP). This Bordetella pertussis (strain Tohama I / ATCC BAA-589 / NCTC 13251) protein is 1-deoxy-D-xylulose 5-phosphate reductoisomerase.